Reading from the N-terminus, the 332-residue chain is Ribosomal RNA small subunit methyltransferase H (332 aa).

Residues 36–38 (GGY), Asp54, Phe81, Asp102, and Gln109 each bind S-adenosyl-L-methionine. The tract at residues 284–332 (VTAGQEEVSANPRARSAKLRAAERTAAPATADDGESPGWPSLANVMRGG) is disordered.

The protein belongs to the methyltransferase superfamily. RsmH family.

Its subcellular location is the cytoplasm. The catalysed reaction is cytidine(1402) in 16S rRNA + S-adenosyl-L-methionine = N(4)-methylcytidine(1402) in 16S rRNA + S-adenosyl-L-homocysteine + H(+). Specifically methylates the N4 position of cytidine in position 1402 (C1402) of 16S rRNA. This is Ribosomal RNA small subunit methyltransferase H from Nitrobacter hamburgensis (strain DSM 10229 / NCIMB 13809 / X14).